A 65-amino-acid polypeptide reads, in one-letter code: uncharacterized protein (65 aa).

This is an uncharacterized protein from Homo sapiens (Human).